Reading from the N-terminus, the 422-residue chain is Serine protease HTRA2, mitochondrial (422 aa).

The transit peptide at 1-17 (MALRGSHRLEVIFKRCI) directs the protein to the mitochondrion. A propeptide spanning residues 18–74 (ASPVLHSQAGNRRSSQLAIKGVDPNSNGNSGQYQQNGEHKEKGWRRLVRFFVPFSLG) is cleaved from the precursor. The segment at 28 to 55 (NRRSSQLAIKGVDPNSNGNSGQYQQNGE) is disordered. Residues 42 to 53 (NSNGNSGQYQQN) show a composition bias toward low complexity. The chain crosses the membrane as a helical span at residues 64–82 (LVRFFVPFSLGAAVSAAII). Short sequence motifs (IAP-binding) lie at residues 75–78 (AAVS) and 94–97 (SKMT). The interval 139-302 (SNGSGFIIEQ…IPIDYVKVFL (164 aa)) is serine protease. Catalysis depends on charge relay system residues His-157, Asp-189, and Ser-266. Positions 325–410 (MGITMLTLTP…TLDIVILRGV (86 aa)) constitute a PDZ domain.

This sequence belongs to the peptidase S1C family. As to quaternary structure, interacts with th/DIAP1 (via BIR 2 domain).

The protein localises to the mitochondrion intermembrane space. It is found in the mitochondrion membrane. The catalysed reaction is Cleavage of non-polar aliphatic amino-acids at the P1 position, with a preference for Val, Ile and Met. At the P2 and P3 positions, Arg is selected most strongly with a secondary preference for other hydrophilic residues.. Its function is as follows. Serine protease that shows proteolytic activity against a non-specific substrate beta-casein. Promotes or induces cell death either by direct binding to and inhibition of BIRC proteins (also called inhibitor of apoptosis proteins, IAPs), leading to an increase in caspase activity, or by a BIRC inhibition-independent, caspase-independent and serine protease activity-dependent mechanism. Can antagonize antiapoptotic activity of th/Diap1 by directly inducing the degradation of th/Diap1. The chain is Serine protease HTRA2, mitochondrial from Drosophila sechellia (Fruit fly).